A 285-amino-acid chain; its full sequence is Bifunctional protein FolD (285 aa).

NADP(+) contacts are provided by residues glycine 165–serine 167 and serine 190.

Belongs to the tetrahydrofolate dehydrogenase/cyclohydrolase family. Homodimer.

The enzyme catalyses (6R)-5,10-methylene-5,6,7,8-tetrahydrofolate + NADP(+) = (6R)-5,10-methenyltetrahydrofolate + NADPH. It catalyses the reaction (6R)-5,10-methenyltetrahydrofolate + H2O = (6R)-10-formyltetrahydrofolate + H(+). It functions in the pathway one-carbon metabolism; tetrahydrofolate interconversion. In terms of biological role, catalyzes the oxidation of 5,10-methylenetetrahydrofolate to 5,10-methenyltetrahydrofolate and then the hydrolysis of 5,10-methenyltetrahydrofolate to 10-formyltetrahydrofolate. The polypeptide is Bifunctional protein FolD (Ligilactobacillus salivarius (strain UCC118) (Lactobacillus salivarius)).